A 361-amino-acid chain; its full sequence is Phospho-N-acetylmuramoyl-pentapeptide-transferase (361 aa).

A run of 10 helical transmembrane segments spans residues 25-45, 71-91, 94-114, 133-153, 169-189, 200-220, 240-260, 264-284, 289-309, and 338-358; these read TGGA…WIID, TPTM…VLWA, LNPY…VGFY, WRLL…VRLG, VAIN…VGAG, GLAI…SYLA, LSVL…FNAP, IFMG…IAVA, IVLA…IVQV, and QIVI…LSTL.

This sequence belongs to the glycosyltransferase 4 family. MraY subfamily. It depends on Mg(2+) as a cofactor.

Its subcellular location is the cell inner membrane. The catalysed reaction is UDP-N-acetyl-alpha-D-muramoyl-L-alanyl-gamma-D-glutamyl-meso-2,6-diaminopimeloyl-D-alanyl-D-alanine + di-trans,octa-cis-undecaprenyl phosphate = di-trans,octa-cis-undecaprenyl diphospho-N-acetyl-alpha-D-muramoyl-L-alanyl-D-glutamyl-meso-2,6-diaminopimeloyl-D-alanyl-D-alanine + UMP. Its pathway is cell wall biogenesis; peptidoglycan biosynthesis. Its function is as follows. Catalyzes the initial step of the lipid cycle reactions in the biosynthesis of the cell wall peptidoglycan: transfers peptidoglycan precursor phospho-MurNAc-pentapeptide from UDP-MurNAc-pentapeptide onto the lipid carrier undecaprenyl phosphate, yielding undecaprenyl-pyrophosphoryl-MurNAc-pentapeptide, known as lipid I. The protein is Phospho-N-acetylmuramoyl-pentapeptide-transferase of Rhodopseudomonas palustris (strain BisB18).